We begin with the raw amino-acid sequence, 146 residues long: Catabolic 3-dehydroquinase (146 aa).

Y24 functions as the Proton acceptor in the catalytic mechanism. 3 residues coordinate substrate: N78, H84, and D91. The active-site Proton donor is the H104. Substrate contacts are provided by residues 105–106 (IT) and R115.

Belongs to the type-II 3-dehydroquinase family. As to quaternary structure, homododecamer. Adopts a ring-like structure, composed of an arrangement of two hexameric rings stacked on top of one another.

It carries out the reaction 3-dehydroquinate = 3-dehydroshikimate + H2O. Its pathway is aromatic compound metabolism; 3,4-dihydroxybenzoate biosynthesis; 3,4-dihydroxybenzoate from 3-dehydroquinate: step 1/2. In terms of biological role, is involved in the catabolism of quinate. Allows the utilization of quinate as carbon source via the beta-ketoadipate pathway. The polypeptide is Catabolic 3-dehydroquinase (Candida tropicalis (strain ATCC MYA-3404 / T1) (Yeast)).